The primary structure comprises 621 residues: Signal recognition particle receptor subunit alpha homolog (621 aa).

The tract at residues 1 to 158 (MFDQLAVFTP…KKFEQYFRIK (158 aa)) is SRX. The disordered stretch occupies residues 167-217 (HINPDNFTKNGSVPQSHNKNTKKKLRDTKGKKQSTGNVGSGRKWGRDGGML). The span at 171-183 (DNFTKNGSVPQSH) shows a compositional bias: polar residues. The segment covering 185–198 (KNTKKKLRDTKGKK) has biased composition (basic residues). Phosphoserine is present on Ser-239. The segment at 398–620 (YVFSIVGVNG…SVKWAVNTLM (223 aa)) is NG domain. Residues 404-411 (GVNGVGKS) and 510-514 (DTAGR) contribute to the GTP site. Position 523 is a phosphoserine (Ser-523). A GTP-binding site is contributed by 572-575 (SKCD).

It belongs to the GTP-binding SRP family. As to quaternary structure, heterodimer of an alpha and a beta chain.

The protein localises to the endoplasmic reticulum membrane. In terms of biological role, component of the SRP (signal recognition particle) receptor (SR). Ensures, in conjunction with the signal recognition particle, the correct targeting of the nascent secretory proteins to the endoplasmic reticulum membrane system. GTP hydrolysis may enhance the fidelity of and provide unidirectionality to the targeting reaction. It is important but not essential for cell growth. May be directly involved in mitochondrial protein import. In Saccharomyces cerevisiae (strain ATCC 204508 / S288c) (Baker's yeast), this protein is Signal recognition particle receptor subunit alpha homolog (SRP101).